The primary structure comprises 740 residues: MAAFSEMGVMPEIAQAVEEMDWLLPTDIQAESIPLILGGGDVLMAAETGSGKTGAFSIPVIQIVYETLKDQQEGKKGKASVKTGSTVLNKWQMNPYDRGSAFAIGSDGLCCQSREIKEWHGCRSTRGVNKGKYYYEVSCHDQGLCRVGWSTLSASLDLGTDKFGFGFGGTGKKSHNKQFDNYGEEFTMHDTIGCYLDIDNSIVKFSKNGKDLGLAFQIPSHMKNQAFFTSCVLKNAELKFNFGEEDFKFPPKDGFVALSKAPDGHVVKSQNTGSAQVSQTKSLPNAPKALIIEPSRELAEQTLNNVKQFKKYVDNPKLRELLIIGGVAAKEQLTILENGVDIVVGTPGRIDDLISTGKLSLSQVRFLVLDEADGLLSQGYSDFINRIYGQIPQITSDGKRLQVIVCSATLHSFDVKKLSEKIMHFPTWVDLKGEDSVPETVHHVVVPVNPKKDKQWEKLAKNHIRTDGVHDKDNTRPGGNSAEVWSEAIKVLKGEYIVRAIKEHKMDQAIIFCRTKLDCDNMEQYFIQQGGGPDKKGHQFSCVCLHSDRKPPERKHNLERFKKCEVRFLICTDVAARGIDIRGVPYVINVTLPDEKQNYVHRIGRVGRAERMGLAISLVASEKEKVWYHVCSSRGKGCYNTRLKEDGGCTIWYNEMQLLSEIEEHLTCTISQVEPDIKVPLDDFDGKVVYGQRRATGGGLYKGHVDILAPTVQELASLEKEAQTSFLHLGYLSNQLFRSF.

The interaction with dsRNA stretch occupies residues 1–448 (MAAFSEMGVM…ETVHHVVVPV (448 aa)). In terms of domain architecture, Helicase ATP-binding spans 2–428 (AAFSEMGVMP…SEKIMHFPTW (427 aa)). 46 to 53 (AETGSGKT) contributes to the ATP binding site. In terms of domain architecture, B30.2/SPRY spans 70 to 247 (DQQEGKKGKA…LKFNFGEEDF (178 aa)). The short motif at 370 to 373 (DEAD) is the DEAD box element. One can recognise a Helicase C-terminal domain in the interval 493–681 (KGEYIVRAIK…QVEPDIKVPL (189 aa)).

The protein belongs to the DEAD box helicase family. DDX1 subfamily.

The protein resides in the nucleus. It is found in the cytoplasm. Its subcellular location is the cytoplasmic granule. It localises to the cytosol. The protein localises to the mitochondrion. It carries out the reaction ATP + H2O = ADP + phosphate + H(+). Functionally, acts as an ATP-dependent RNA helicase, able to unwind both RNA-RNA and RNA-DNA duplexes. Possesses 5' single-stranded RNA overhang nuclease activity. Acts as a positive regulator of transcription. May be involved in 3'-end cleavage and polyadenylation of pre-mRNAs. Binds DNA and RNA. Component of the tRNA-splicing ligase complex required to facilitate the enzymatic turnover of catalytic subunit rtcb. Binds (via helicase ATP-binding domain) on both short and long poly(I:C) dsRNA. The sequence is that of ATP-dependent RNA helicase DDX1 (ddx1) from Xenopus laevis (African clawed frog).